Reading from the N-terminus, the 805-residue chain is Sucrose synthase (805 aa).

A GT-B glycosyltransferase region spans residues 275-752 (MVFNVVILSP…GLQRIEEKYT (478 aa)).

The protein belongs to the glycosyltransferase 1 family. Plant sucrose synthase subfamily.

It carries out the reaction an NDP-alpha-D-glucose + D-fructose = a ribonucleoside 5'-diphosphate + sucrose + H(+). Sucrose-cleaving enzyme that provides UDP-glucose and fructose for various metabolic pathways. In Vigna radiata var. radiata (Mung bean), this protein is Sucrose synthase (SS1).